The primary structure comprises 614 residues: 1-deoxy-D-xylulose-5-phosphate synthase (614 aa).

Residues His74 and 115-117 contribute to the thiamine diphosphate site; that span reads GHS. Position 146 (Asp146) interacts with Mg(2+). Residues 147–148, Asn175, Tyr282, and Glu363 contribute to the thiamine diphosphate site; that span reads GA. Asn175 is a binding site for Mg(2+).

This sequence belongs to the transketolase family. DXPS subfamily. In terms of assembly, homodimer. Mg(2+) is required as a cofactor. It depends on thiamine diphosphate as a cofactor.

It catalyses the reaction D-glyceraldehyde 3-phosphate + pyruvate + H(+) = 1-deoxy-D-xylulose 5-phosphate + CO2. The protein operates within metabolic intermediate biosynthesis; 1-deoxy-D-xylulose 5-phosphate biosynthesis; 1-deoxy-D-xylulose 5-phosphate from D-glyceraldehyde 3-phosphate and pyruvate: step 1/1. Catalyzes the acyloin condensation reaction between C atoms 2 and 3 of pyruvate and glyceraldehyde 3-phosphate to yield 1-deoxy-D-xylulose-5-phosphate (DXP). In Methylobacillus flagellatus (strain ATCC 51484 / DSM 6875 / VKM B-1610 / KT), this protein is 1-deoxy-D-xylulose-5-phosphate synthase.